The following is a 393-amino-acid chain: Beta-ureidopropionase (393 aa).

The region spanning 72 to 344 (VRVGLVQNRI…DGLLVTELNL (273 aa)) is the CN hydrolase domain. Residue E119 is the Proton acceptor of the active site. K196 acts as the Proton donor in catalysis. C233 functions as the Nucleophile in the catalytic mechanism. S378 bears the Phosphoserine mark.

The protein belongs to the carbon-nitrogen hydrolase superfamily. BUP family. In terms of assembly, homodimer, homotetramer, homooctamer; can also form higher homooligomers.

Its subcellular location is the cytoplasm. It carries out the reaction 3-(carbamoylamino)propanoate + H2O + 2 H(+) = beta-alanine + NH4(+) + CO2. It catalyses the reaction 3-(carbamoylamino)-2-methylpropanoate + H2O + 2 H(+) = (R)-3-amino-2-methylpropanoate + NH4(+) + CO2. The protein operates within amino-acid biosynthesis; beta-alanine biosynthesis. Its function is as follows. Catalyzes a late step in pyrimidine degradation. Converts N-carbamoyl-beta-alanine (3-ureidopropanoate) into beta-alanine, ammonia and carbon dioxide. Likewise, converts N-carbamoyl-beta-aminoisobutyrate (3-ureidoisobutyrate) into beta-aminoisobutyrate, ammonia and carbon dioxide. This Mus musculus (Mouse) protein is Beta-ureidopropionase (Upb1).